We begin with the raw amino-acid sequence, 184 residues long: ATP synthase subunit b, chloroplastic (184 aa).

Residues 27–49 (LATNPINLSVVFGVLIFFGKGVL) traverse the membrane as a helical segment.

The protein belongs to the ATPase B chain family. In terms of assembly, F-type ATPases have 2 components, F(1) - the catalytic core - and F(0) - the membrane proton channel. F(1) has five subunits: alpha(3), beta(3), gamma(1), delta(1), epsilon(1). F(0) has four main subunits: a(1), b(1), b'(1) and c(10-14). The alpha and beta chains form an alternating ring which encloses part of the gamma chain. F(1) is attached to F(0) by a central stalk formed by the gamma and epsilon chains, while a peripheral stalk is formed by the delta, b and b' chains.

The protein localises to the plastid. The protein resides in the chloroplast thylakoid membrane. Its function is as follows. F(1)F(0) ATP synthase produces ATP from ADP in the presence of a proton or sodium gradient. F-type ATPases consist of two structural domains, F(1) containing the extramembraneous catalytic core and F(0) containing the membrane proton channel, linked together by a central stalk and a peripheral stalk. During catalysis, ATP synthesis in the catalytic domain of F(1) is coupled via a rotary mechanism of the central stalk subunits to proton translocation. In terms of biological role, component of the F(0) channel, it forms part of the peripheral stalk, linking F(1) to F(0). The sequence is that of ATP synthase subunit b, chloroplastic from Lobularia maritima (Sweet alyssum).